The following is a 79-amino-acid chain: Bacteriochlorophyll c-binding protein (79 aa).

H25 lines the a bacteriochlorophyll c pocket.

Belongs to the BChl C/E-binding protein family.

It is found in the chlorosome. It localises to the chlorosome envelope. Its function is as follows. Component of the photosynthetic apparatus. The light harvesting B740 complex binds bacteriochlorophyll c. In Chlorobaculum tepidum (strain ATCC 49652 / DSM 12025 / NBRC 103806 / TLS) (Chlorobium tepidum), this protein is Bacteriochlorophyll c-binding protein (csmA).